A 248-amino-acid chain; its full sequence is tRNA (guanine-N(1)-)-methyltransferase (248 aa).

S-adenosyl-L-methionine contacts are provided by residues Gly113 and 133 to 138; that span reads IGDYVL.

Belongs to the RNA methyltransferase TrmD family. Homodimer.

The protein localises to the cytoplasm. The catalysed reaction is guanosine(37) in tRNA + S-adenosyl-L-methionine = N(1)-methylguanosine(37) in tRNA + S-adenosyl-L-homocysteine + H(+). Functionally, specifically methylates guanosine-37 in various tRNAs. The polypeptide is tRNA (guanine-N(1)-)-methyltransferase (Shewanella frigidimarina (strain NCIMB 400)).